The chain runs to 493 residues: Serine/threonine-protein kinase PBL34 (493 aa).

2 disordered regions span residues 1–42 (MGLD…EEEE) and 84–117 (SKSA…TPVI). Residue Gly2 is the site of N-myristoyl glycine attachment. Over residues 12–37 (WKSEKPKETENKNHKKKNGDDNKSRN) the composition is skewed to basic and acidic residues. Over residues 100–114 (SSTTTTSNAESSSST) the composition is skewed to low complexity. Residue Thr131 is modified to Phosphothreonine. Residues 142–428 (FRPESLLGEG…VEALKPLPHL (287 aa)) form the Protein kinase domain. Residues 148–156 (LGEGGFGCV) and Lys180 each bind ATP. Tyr225 is subject to Phosphotyrosine. Asp275 serves as the catalytic Proton acceptor. Position 279 is a phosphoserine (Ser279). Phosphothreonine is present on Thr306. Ser309 carries the phosphoserine modification. Phosphothreonine is present on residues Thr310 and Thr315. Tyr323 carries the post-translational modification Phosphotyrosine. The segment at 447-493 (KNGSGRSQGFGSRNGQHQPVFRTLSSPHGSSPYRHQIPSPKPKGATT) is disordered. Positions 450-475 (SGRSQGFGSRNGQHQPVFRTLSSPHG) are enriched in polar residues.

The protein belongs to the protein kinase superfamily. Ser/Thr protein kinase family. Interacts with the Xanthomonas campestris effector XopAC/AvrAC. Interacts with SD129. Post-translationally, phosphorylated by SD129 at Thr-306 and Thr-310 in response to the pathogen-associated molecular pattern (PAMP) 3-OH-C10:0, a medium-chain 3-hydroxy fatty acid.

It localises to the cell membrane. The catalysed reaction is L-seryl-[protein] + ATP = O-phospho-L-seryl-[protein] + ADP + H(+). It carries out the reaction L-threonyl-[protein] + ATP = O-phospho-L-threonyl-[protein] + ADP + H(+). In terms of biological role, involved in chitin-triggered immune signaling and is required for reactive oxygen species (ROS) production. Acts downstream of SD129 in defense signaling triggered by the pathogen-associated molecular pattern (PAMP) 3-OH-C10:0, a medium-chain 3-hydroxy fatty acid. The sequence is that of Serine/threonine-protein kinase PBL34 from Arabidopsis thaliana (Mouse-ear cress).